We begin with the raw amino-acid sequence, 75 residues long: Theromacin (75 aa).

Cystine bridges form between Cys2/Cys9, Cys24/Cys28, Cys31/Cys73, Cys39/Cys47, and Cys57/Cys59.

This sequence belongs to the macin family.

The protein localises to the secreted. Its function is as follows. Has a bactericial activity. This chain is Theromacin, found in Hirudo medicinalis (Medicinal leech).